A 345-amino-acid chain; its full sequence is Eukaryotic translation initiation factor 3 subunit F (345 aa).

Positions 30–166 constitute an MPN domain; sequence VVIHPQALFS…TRAYISAPVG (137 aa). Residues 308 to 345 are disordered; the sequence is GGESGNAESGQRGGQRGGKGGRGGQQRTQDRSGEEARA. Positions 318-331 are enriched in gly residues; the sequence is QRGGQRGGKGGRGG. Residues 335-345 are compositionally biased toward basic and acidic residues; that stretch reads TQDRSGEEARA.

It belongs to the eIF-3 subunit F family. Component of the eukaryotic translation initiation factor 3 (eIF-3) complex.

The protein localises to the cytoplasm. Functionally, component of the eukaryotic translation initiation factor 3 (eIF-3) complex, which is involved in protein synthesis of a specialized repertoire of mRNAs and, together with other initiation factors, stimulates binding of mRNA and methionyl-tRNAi to the 40S ribosome. The eIF-3 complex specifically targets and initiates translation of a subset of mRNAs involved in cell proliferation. The chain is Eukaryotic translation initiation factor 3 subunit F from Aspergillus oryzae (strain ATCC 42149 / RIB 40) (Yellow koji mold).